A 61-amino-acid polypeptide reads, in one-letter code: MFQISNLLLAADFSSEVANNSAVGMIGSFIAAALLIVIPATAFLIFVSQKDSLNRTSTGRR.

Residues isoleucine 26 to phenylalanine 46 traverse the membrane as a helical segment.

This sequence belongs to the PsbX family. Type 2 subfamily. As to quaternary structure, PSII consists of a core antenna complex that captures photons, and an electron transfer chain that converts photonic excitation into a charge separation. PSII forms dimeric complexes.

The protein resides in the cellular thylakoid membrane. Functionally, involved in the binding and/or turnover of quinones at the Q(B) site of Photosystem II. The protein is Photosystem II reaction center X protein of Prochlorococcus marinus (strain MIT 9312).